Consider the following 62-residue polypeptide: Photosystem II reaction center protein Z (62 aa).

Transmembrane regions (helical) follow at residues 8–28 (AVFA…VVFA) and 41–61 (FSGT…NSLI).

Belongs to the PsbZ family. PSII is composed of 1 copy each of membrane proteins PsbA, PsbB, PsbC, PsbD, PsbE, PsbF, PsbH, PsbI, PsbJ, PsbK, PsbL, PsbM, PsbT, PsbY, PsbZ, Psb30/Ycf12, at least 3 peripheral proteins of the oxygen-evolving complex and a large number of cofactors. It forms dimeric complexes.

It localises to the plastid. Its subcellular location is the chloroplast thylakoid membrane. Its function is as follows. May control the interaction of photosystem II (PSII) cores with the light-harvesting antenna, regulates electron flow through the 2 photosystem reaction centers. PSII is a light-driven water plastoquinone oxidoreductase, using light energy to abstract electrons from H(2)O, generating a proton gradient subsequently used for ATP formation. The chain is Photosystem II reaction center protein Z from Calycanthus floridus var. glaucus (Eastern sweetshrub).